A 481-amino-acid chain; its full sequence is Glutamyl-tRNA(Gln) amidotransferase subunit A (481 aa).

Residues K77 and S151 each act as charge relay system in the active site. S175 (acyl-ester intermediate) is an active-site residue.

The protein belongs to the amidase family. GatA subfamily. In terms of assembly, heterotrimer of A, B and C subunits.

The enzyme catalyses L-glutamyl-tRNA(Gln) + L-glutamine + ATP + H2O = L-glutaminyl-tRNA(Gln) + L-glutamate + ADP + phosphate + H(+). In terms of biological role, allows the formation of correctly charged Gln-tRNA(Gln) through the transamidation of misacylated Glu-tRNA(Gln) in organisms which lack glutaminyl-tRNA synthetase. The reaction takes place in the presence of glutamine and ATP through an activated gamma-phospho-Glu-tRNA(Gln). In Rubrobacter xylanophilus (strain DSM 9941 / JCM 11954 / NBRC 16129 / PRD-1), this protein is Glutamyl-tRNA(Gln) amidotransferase subunit A.